A 219-amino-acid polypeptide reads, in one-letter code: Cytidylate kinase (219 aa).

10–18 (GPAAAGKST) is an ATP binding site.

This sequence belongs to the cytidylate kinase family. Type 1 subfamily.

The protein resides in the cytoplasm. The enzyme catalyses CMP + ATP = CDP + ADP. The catalysed reaction is dCMP + ATP = dCDP + ADP. In Staphylococcus saprophyticus subsp. saprophyticus (strain ATCC 15305 / DSM 20229 / NCIMB 8711 / NCTC 7292 / S-41), this protein is Cytidylate kinase.